Reading from the N-terminus, the 217-residue chain is Small ribosomal subunit protein uS3 (217 aa).

A KH type-2 domain is found at 40–110 (IRDLINKGFN…EVYINIHEVR (71 aa)).

Belongs to the universal ribosomal protein uS3 family. As to quaternary structure, part of the 30S ribosomal subunit. Forms a tight complex with proteins S10 and S14.

In terms of biological role, binds the lower part of the 30S subunit head. Binds mRNA in the 70S ribosome, positioning it for translation. The polypeptide is Small ribosomal subunit protein uS3 (Rickettsia africae (strain ESF-5)).